The following is a 91-amino-acid chain: Uteroglobin (91 aa).

The signal sequence occupies residues 1 to 21; sequence MKLAITLALVTLALLCSPASA.

This sequence belongs to the secretoglobin family. Antiparallel homodimer; disulfide-linked. Interaction with LMBR1L is controversial. In terms of tissue distribution, synthesized in the uterus and lung.

It is found in the secreted. Functionally, uteroglobin binds progesterone specifically and with high affinity. It may regulate progesterone concentrations reaching the blastocyst. It is also a potent inhibitor of phospholipase A2. This is Uteroglobin (SCGB1A1) from Oryctolagus cuniculus (Rabbit).